A 494-amino-acid chain; its full sequence is UPF0371 protein SPJ_0333 (494 aa).

Belongs to the UPF0371 family.

In Streptococcus pneumoniae (strain JJA), this protein is UPF0371 protein SPJ_0333.